Consider the following 82-residue polypeptide: UPF0291 protein PEPE_0871 (82 aa).

Belongs to the UPF0291 family.

It is found in the cytoplasm. The sequence is that of UPF0291 protein PEPE_0871 from Pediococcus pentosaceus (strain ATCC 25745 / CCUG 21536 / LMG 10740 / 183-1w).